A 122-amino-acid polypeptide reads, in one-letter code: MSSLAQKQVARLKRQTRVRKKITGSPARPRLNVFKSARHIYAQLIDDTTGATLASASTLLGDVAEGLSYTGNIEAATKVGAAIAKKALEKEITAVVFDRNGFLYHGRIKALADAARENGLSF.

Belongs to the universal ribosomal protein uL18 family. Part of the 50S ribosomal subunit; part of the 5S rRNA/L5/L18/L25 subcomplex. Contacts the 5S and 23S rRNAs.

Functionally, this is one of the proteins that bind and probably mediate the attachment of the 5S RNA into the large ribosomal subunit, where it forms part of the central protuberance. In Geobacter sp. (strain M21), this protein is Large ribosomal subunit protein uL18.